The primary structure comprises 268 residues: Tryptophan synthase alpha chain (268 aa).

Active-site proton acceptor residues include E49 and D60.

The protein belongs to the TrpA family. As to quaternary structure, tetramer of two alpha and two beta chains.

It carries out the reaction (1S,2R)-1-C-(indol-3-yl)glycerol 3-phosphate + L-serine = D-glyceraldehyde 3-phosphate + L-tryptophan + H2O. It functions in the pathway amino-acid biosynthesis; L-tryptophan biosynthesis; L-tryptophan from chorismate: step 5/5. Its function is as follows. The alpha subunit is responsible for the aldol cleavage of indoleglycerol phosphate to indole and glyceraldehyde 3-phosphate. This Erwinia tasmaniensis (strain DSM 17950 / CFBP 7177 / CIP 109463 / NCPPB 4357 / Et1/99) protein is Tryptophan synthase alpha chain.